Consider the following 317-residue polypeptide: MSFSAETKDELARIEEGKRCCNLAELAALVRMDGTLQIANHSYALNVITESAPVARKVYRLAKNLLGLPVDIMVRRKLRLKKNNSYMVKIYPRTLEDLQQLGLLDEEGEILPGIPNVLVKKKCDRIAYLRGAFLAGGSINNPEGTYHLEIITNDPLHAEALSKLLNKFHLGAKVSMRKNWHVVYIKESEHIVEFLGFIGAHRALLEFENVRVLKDMRNQVNRLVNCETANLNKTVDAAVRQVENIQRVANTIGLQALPEPLREIAELRLEYPDASLKELGEMLVPKVGKSGVNHRMRKIDELAEKLEEQSKRVRKGG.

Positions Ser-275–Glu-308 form a DNA-binding region, H-T-H motif.

It belongs to the WhiA family.

Its function is as follows. Involved in cell division and chromosome segregation. The sequence is that of Probable cell division protein WhiA from Desulfitobacterium hafniense (strain DSM 10664 / DCB-2).